The primary structure comprises 675 residues: Methionine--tRNA ligase (675 aa).

The short motif at 15 to 25 (PYANGSIHLGH) is the 'HIGH' region element. Residues Cys146, Cys149, Cys159, and Cys162 each contribute to the Zn(2+) site. Positions 331–335 (KMSKS) match the 'KMSKS' region motif. Lys334 provides a ligand contact to ATP. The region spanning 574–675 (DFAKIDLRIA…EGAQPGMKVK (102 aa)) is the tRNA-binding domain.

This sequence belongs to the class-I aminoacyl-tRNA synthetase family. MetG type 1 subfamily. In terms of assembly, homodimer. It depends on Zn(2+) as a cofactor.

It localises to the cytoplasm. The enzyme catalyses tRNA(Met) + L-methionine + ATP = L-methionyl-tRNA(Met) + AMP + diphosphate. Is required not only for elongation of protein synthesis but also for the initiation of all mRNA translation through initiator tRNA(fMet) aminoacylation. The sequence is that of Methionine--tRNA ligase from Pseudoalteromonas atlantica (strain T6c / ATCC BAA-1087).